Here is a 288-residue protein sequence, read N- to C-terminus: ATP synthase gamma chain (288 aa).

The protein belongs to the ATPase gamma chain family. In terms of assembly, F-type ATPases have 2 components, CF(1) - the catalytic core - and CF(0) - the membrane proton channel. CF(1) has five subunits: alpha(3), beta(3), gamma(1), delta(1), epsilon(1). CF(0) has three main subunits: a, b and c.

It localises to the cell inner membrane. Functionally, produces ATP from ADP in the presence of a proton gradient across the membrane. The gamma chain is believed to be important in regulating ATPase activity and the flow of protons through the CF(0) complex. The sequence is that of ATP synthase gamma chain from Vibrio cholerae serotype O1 (strain ATCC 39541 / Classical Ogawa 395 / O395).